Consider the following 240-residue polypeptide: MGTQLSPAEVREFQETVGVEIAPDILTRALTHRSYAYENGGLPTNERLEFLGDSVLGLVVTDTLYRTHPDLSEGQLAKLRAAVVNMRALADVARELGIGRYVRLGRGEEATGGRDKSSILADTLEALIGAVYLDRGLDEASELVHRLFDPLIARASGLGAGLDWKTSLQELTAAELLGVPEYVVEESGPDHQKTFRATVRVAGQTYGSGEGRSKKEAEQQAAESAWKAIRAATEKAKQES.

Positions 10 to 136 (VREFQETVGV…LIGAVYLDRG (127 aa)) constitute an RNase III domain. Residue Glu49 coordinates Mg(2+). Asp53 is an active-site residue. Mg(2+) is bound by residues Asp122 and Glu125. Residue Glu125 is part of the active site. Residues 163 to 231 (DWKTSLQELT…AESAWKAIRA (69 aa)) enclose the DRBM domain. Positions 205 to 240 (TYGSGEGRSKKEAEQQAAESAWKAIRAATEKAKQES) are disordered. A compositionally biased stretch (low complexity) spans 219–228 (QQAAESAWKA).

It belongs to the ribonuclease III family. In terms of assembly, homodimer. Mg(2+) is required as a cofactor.

The protein localises to the cytoplasm. The enzyme catalyses Endonucleolytic cleavage to 5'-phosphomonoester.. In terms of biological role, digests double-stranded RNA. Involved in the processing of primary rRNA transcript to yield the immediate precursors to the large and small rRNAs (23S and 16S). Processes some mRNAs, and tRNAs when they are encoded in the rRNA operon. Processes pre-crRNA and tracrRNA of type II CRISPR loci if present in the organism. This is Ribonuclease 3 from Thermobifida fusca (strain YX).